A 639-amino-acid chain; its full sequence is Chaperone protein DnaK (639 aa).

Position 198 is a phosphothreonine; by autocatalysis (Thr198). Over residues 603–618 the composition is skewed to low complexity; sequence AKAQTQGGAQEGAAKQ. Residues 603–639 form a disordered region; that stretch reads AKAQTQGGAQEGAAKQSNATADDVVDAEFEEVKDDKK. Residues 625 to 639 show a composition bias toward acidic residues; the sequence is DVVDAEFEEVKDDKK.

It belongs to the heat shock protein 70 family.

In terms of biological role, acts as a chaperone. The protein is Chaperone protein DnaK of Shewanella sp. (strain ANA-3).